Reading from the N-terminus, the 177-residue chain is Large ribosomal subunit protein uL6 (177 aa).

This sequence belongs to the universal ribosomal protein uL6 family. In terms of assembly, part of the 50S ribosomal subunit.

Functionally, this protein binds to the 23S rRNA, and is important in its secondary structure. It is located near the subunit interface in the base of the L7/L12 stalk, and near the tRNA binding site of the peptidyltransferase center. This is Large ribosomal subunit protein uL6 from Vibrio cholerae serotype O1 (strain ATCC 39541 / Classical Ogawa 395 / O395).